The following is a 330-amino-acid chain: D-lactate dehydrogenase (330 aa).

Residues 156–157 (RI), Asp176, 206–207 (VP), 233–235 (AAR), and Asp259 contribute to the NAD(+) site. The active site involves Arg235. Residue Glu264 is part of the active site. Catalysis depends on His296, which acts as the Proton donor.

The protein belongs to the D-isomer specific 2-hydroxyacid dehydrogenase family.

It carries out the reaction (R)-lactate + NAD(+) = pyruvate + NADH + H(+). This Staphylococcus aureus protein is D-lactate dehydrogenase (ldhD).